A 328-amino-acid polypeptide reads, in one-letter code: Ethanol acetyltransferase 1 (328 aa).

One can recognise an AB hydrolase-1 domain in the interval 39-309; that stretch reads PAIINIHGLL…TGHNLLLENP (271 aa). Catalysis depends on charge relay system residues serine 115, aspartate 139, and histidine 302.

Belongs to the AB hydrolase superfamily.

It is found in the mitochondrion. The catalysed reaction is ethanol + acetyl-CoA = ethyl acetate + CoA. It carries out the reaction acetyl-CoA + H2O = acetate + CoA + H(+). It catalyses the reaction ethyl acetate + H2O = ethanol + acetate + H(+). In terms of biological role, alcohol acetyltransferase that catalyzes the synthesis of ethyl acetate from ethanol and acetyl-CoA. Can also function as a thioesterase by hydrolyzing acetyl-CoA in the absence of ethanol, as well as esterase hydrolyzing ethyl acetate. In Saccharomyces cerevisiae (strain ATCC 204508 / S288c) (Baker's yeast), this protein is Ethanol acetyltransferase 1.